The following is a 349-amino-acid chain: Green-sensitive opsin-1 (349 aa).

Over 1–36 (MNGTEGKNFYVPMSNRTGLVRSPFEYPQYYLAEPWQ) the chain is Extracellular. Residues Asn-2 and Asn-15 are each glycosylated (N-linked (GlcNAc...) asparagine). Residues 37 to 61 (FKILALYLFFLMSMGLPINGLTLVV) form a helical membrane-spanning segment. Residues 62 to 73 (TAQHKKLRQPLN) are Cytoplasmic-facing. The helical transmembrane segment at 74 to 99 (FILVNLAVAGTIMVCFGFTVTFYTAI) threads the bilayer. At 100–113 (NGYFVLGPTGCAVE) the chain is on the extracellular side. The cysteines at positions 110 and 187 are disulfide-linked. A helical transmembrane segment spans residues 114-133 (GFMATLGGEVALWSLVVLAI). Residues 134-152 (ERYIVVCKPMGSFKFSSSH) lie on the Cytoplasmic side of the membrane. Residues 153-176 (AFAGIAFTWVMALACAAPPLFGWS) form a helical membrane-spanning segment. Over 177–202 (RYIPEGMQCSCGPDYYTLNPDYNNES) the chain is Extracellular. A helical membrane pass occupies residues 203–230 (YVIYMFVCHFILPVAVIFFTYGRLVCTV). Topologically, residues 231 to 252 (KAAAAQQQDSASTQKAEREVTK) are cytoplasmic. A helical membrane pass occupies residues 253-276 (MVILMVFGFLIAWTPYATVAAWIF). The Extracellular segment spans residues 277–284 (FNKGADFS). Residues 285 to 309 (AKFMAIPAFFSKSSALYNPVIYVLL) form a helical membrane-spanning segment. Position 296 is an N6-(retinylidene)lysine (Lys-296). Topologically, residues 310–349 (NKQFRNCMLTTIFCGKNPLGDDESSTVSTSKTEVSSVSPA) are cytoplasmic. Residues 329–349 (GDDESSTVSTSKTEVSSVSPA) are disordered. The segment covering 334–349 (STVSTSKTEVSSVSPA) has biased composition (low complexity).

It belongs to the G-protein coupled receptor 1 family. Opsin subfamily. Phosphorylated on some or all of the serine and threonine residues present in the C-terminal region. In terms of tissue distribution, the color pigments are found in the cone photoreceptor cells.

The protein localises to the membrane. Its function is as follows. Visual pigments are the light-absorbing molecules that mediate vision. They consist of an apoprotein, opsin, covalently linked to cis-retinal. This chain is Green-sensitive opsin-1, found in Carassius auratus (Goldfish).